The chain runs to 515 residues: Cytochrome P450 monooxygenase paxP (515 aa).

A helical membrane pass occupies residues 20–36; the sequence is SLLWKLGVFAVLVYFLL. A heme-binding site is contributed by cysteine 456.

Belongs to the cytochrome P450 family. Heme is required as a cofactor.

The protein localises to the membrane. It participates in secondary metabolite biosynthesis. In terms of biological role, cytochrome P450 monooxygenase; part of the ATM2 gene cluster that mediates the biosynthesis of paxilline, a mycotoxin that acts as an inhibitor of mammalian maxi-K channels. PaxG, the geranylgeranyl diphosphate (GGPP) synthase is proposed to catalyze the first step in paxilline biosynthesis. Condensation of indole-3-glycerol phosphate with GGPP by paxC then forms 3-geranylgeranylindole (3-GGI), followed by epoxidation and cyclization of this intermediate (by paxM and paxB) to form paspaline. Paspaline is subsequently converted to 13-desoxypaxilline by paxP, the latter being then converted to paxilline by paxQ. Finally paxilline can be mono- and di-prenylated by paxD. PaxP can also utilized beta-paxitriol and alpha-PC-M6 as substrates converting them to paxilline. The sequence is that of Cytochrome P450 monooxygenase paxP from Penicillium paxilli.